The chain runs to 1066 residues: E3 ubiquitin-protein ligase RNF31 (1066 aa).

The interval 1-479 (MPGDEERGFL…PEKQRQDKMR (479 aa)) is polyubiquitin-binding. Residues 70-141 (TLSTALNILE…SFPEGQEEPD (72 aa)) form the PUB domain. Positions 251–287 (LRQALPGSHQTASLSSSLPASSQPRPPSSSLALGDSS) are disordered. Over residues 262-287 (ASLSSSLPASSQPRPPSSSLALGDSS) the composition is skewed to low complexity. RanBP2-type zinc fingers lie at residues 293 to 325 (PANA…PKGC) and 344 to 373 (ARDQ…PRLA). Ser-377 carries the phosphoserine modification. The RanBP2-type 3 zinc-finger motif lies at 403–432 (QPQVWYCDHCTFCNSGPVWVCAMCNRTRDP). The disordered stretch occupies residues 434–478 (PTQPALQSYPSSLEKGRPKPGSSQHLGSSLPASCGDPEKQRQDKM). Over residues 454–464 (GSSQHLGSSLP) the composition is skewed to polar residues. Residues 469-478 (DPEKQRQDKM) are compositionally biased toward basic and acidic residues. An interaction with RBCK1 region spans residues 557–610 (GNLDEAVEECVRARRRKVHELQSLGFGPKEGSLQALFQHGGDVARALTELQRQR). Residues 558–609 (NLDEAVEECVRARRRKVHELQSLGFGPKEGSLQALFQHGGDVARALTELQRQ) form the UBA domain. The tract at residues 689 to 923 (LAQECAVCGW…KSLHGHHPRD (235 aa)) is TRIAD supradomain. Positions 693, 696, 711, 713, 716, 719, 738, 741, 793, 796, 811, 814, 819, 822, 830, 835, 865, and 868 each coordinate Zn(2+). The RING-type 1 zinc-finger motif lies at 693-743 (CAVCGWALPRNRMQALISCECTICPECFRQHFTIALKEKHITDMVCPACGR). An IBR-type zinc finger spans residues 773-835 (ALFHKKLTEA…WEEQHRGRSC (63 aa)). The RING-type 2; atypical zinc-finger motif lies at 865 to 895 (CPKCKFSYALARGGCMHFHCTQCRHQFCSGC). Cys-879 is a catalytic residue. Residues Cys-884, Cys-887, Cys-892, Cys-895, Cys-910, and His-919 each coordinate Zn(2+). The segment at 904 to 1066 (KCPDPNCKVK…LGQSIARRRK (163 aa)) is LDD domain.

It belongs to the RBR family. As to quaternary structure, component of the LUBAC complex (linear ubiquitin chain assembly complex) which consists of SHARPIN, RBCK1 and RNF31. LUBAC has a MW of approximately 600 kDa suggesting a heteromultimeric assembly of its subunits. Associates with the TNF-R1 signaling complex (TNF-RSC) in a stimulation-dependent manner. Interacts (via the PUB domain) with OTULIN (via the PIM motif); the interaction is direct. Interacts (via the PUB domain) with VCP (via the PIM motif). Interacts (via the PUB domain) with SPATA2 (via the PIM motif); interaction is direct and bridges RNF31 and CYLD. Interacts with CYLD; the interaction is indirect and is mediated via SPATA2. Interacts with MUSK. Interacts with CARD11, promoting linear ubiquitination of BCL10. Autoubiquitinated. Interaction with OTULIN is required to suppress formation of 'Met-1'-linked polyubiquitin chains and prevent subsequent inactivation of the LUBAC complex. In terms of processing, cleaved by caspase during apoptosis. Widely expressed (at protein level). Not expressed in heart.

It is found in the cytoplasm. The catalysed reaction is [E2 ubiquitin-conjugating enzyme]-S-ubiquitinyl-L-cysteine + [acceptor protein]-L-lysine = [E2 ubiquitin-conjugating enzyme]-L-cysteine + [acceptor protein]-N(6)-ubiquitinyl-L-lysine.. It participates in protein modification; protein ubiquitination. E3 ubiquitin-protein ligase component of the LUBAC complex which conjugates linear ('Met-1'-linked) polyubiquitin chains to substrates and plays a key role in NF-kappa-B activation and regulation of inflammation. LUBAC conjugates linear polyubiquitin to IKBKG and RIPK1 and is involved in activation of the canonical NF-kappa-B and the JNK signaling pathways. Linear ubiquitination mediated by the LUBAC complex interferes with TNF-induced cell death and thereby prevents inflammation. LUBAC is recruited to the TNF-R1 signaling complex (TNF-RSC) following polyubiquitination of TNF-RSC components by BIRC2 and/or BIRC3 and to conjugate linear polyubiquitin to IKBKG and possibly other components contributing to the stability of the complex. The LUBAC complex is also involved in innate immunity by conjugating linear polyubiquitin chains at the surface of bacteria invading the cytosol to form the ubiquitin coat surrounding bacteria. LUBAC is not able to initiate formation of the bacterial ubiquitin coat, and can only promote formation of linear polyubiquitins on pre-existing ubiquitin. Recruited to the surface of bacteria by RNF213, which initiates the bacterial ubiquitin coat. The bacterial ubiquitin coat acts as an 'eat-me' signal for xenophagy and promotes NF-kappa-B activation. Together with OTULIN, the LUBAC complex regulates the canonical Wnt signaling during angiogenesis. RNF31 is required for linear ubiquitination of BCL10, thereby promoting TCR-induced NF-kappa-B activation. Binds polyubiquitin of different linkage types. This Mus musculus (Mouse) protein is E3 ubiquitin-protein ligase RNF31.